The primary structure comprises 444 residues: Putative dipeptidase CPC735_015490 (444 aa).

The signal sequence occupies residues 1–34 (MSQRTEHNGSWLRNAGSLLSVLACVAVLASPASA). Zn(2+)-binding residues include histidine 67, aspartate 69, and glutamate 178. Cysteine 118 and cysteine 207 are disulfide-bonded. Histidine 205 lines the substrate pocket. Zn(2+)-binding residues include histidine 250 and histidine 271. Positions 282 and 342 each coordinate substrate. The N-linked (GlcNAc...) asparagine glycan is linked to asparagine 413.

It belongs to the metallo-dependent hydrolases superfamily. Peptidase M19 family. Zn(2+) serves as cofactor.

It catalyses the reaction an L-aminoacyl-L-amino acid + H2O = 2 an L-alpha-amino acid. Functionally, hydrolyzes a wide range of dipeptides. This chain is Putative dipeptidase CPC735_015490, found in Coccidioides posadasii (strain C735) (Valley fever fungus).